The primary structure comprises 242 residues: ATP-dependent dethiobiotin synthetase BioD (242 aa).

12 to 17 (EVGKTV) serves as a coordination point for ATP. Thr-16 serves as a coordination point for Mg(2+). Lys-37 is a catalytic residue. Ser-41 lines the substrate pocket. ATP contacts are provided by residues Asp-51 and 112–115 (EGAG). Mg(2+)-binding residues include Asp-51 and Glu-112.

Belongs to the dethiobiotin synthetase family. As to quaternary structure, homodimer. Mg(2+) serves as cofactor.

It is found in the cytoplasm. The enzyme catalyses (7R,8S)-7,8-diammoniononanoate + CO2 + ATP = (4R,5S)-dethiobiotin + ADP + phosphate + 3 H(+). The protein operates within cofactor biosynthesis; biotin biosynthesis; biotin from 7,8-diaminononanoate: step 1/2. In terms of biological role, catalyzes a mechanistically unusual reaction, the ATP-dependent insertion of CO2 between the N7 and N8 nitrogen atoms of 7,8-diaminopelargonic acid (DAPA, also called 7,8-diammoniononanoate) to form a ureido ring. The sequence is that of ATP-dependent dethiobiotin synthetase BioD from Bacillus cereus (strain B4264).